The following is an 81-amino-acid chain: ATP synthase subunit c, chloroplastic (81 aa).

2 helical membrane-spanning segments follow: residues 3–23 (AIVS…AAIG) and 57–77 (LAFM…LLFA).

Belongs to the ATPase C chain family. F-type ATPases have 2 components, F(1) - the catalytic core - and F(0) - the membrane proton channel. F(1) has five subunits: alpha(3), beta(3), gamma(1), delta(1), epsilon(1). F(0) has four main subunits: a(1), b(1), b'(1) and c(10-14). The alpha and beta chains form an alternating ring which encloses part of the gamma chain. F(1) is attached to F(0) by a central stalk formed by the gamma and epsilon chains, while a peripheral stalk is formed by the delta, b and b' chains.

It is found in the plastid. It localises to the chloroplast thylakoid membrane. F(1)F(0) ATP synthase produces ATP from ADP in the presence of a proton or sodium gradient. F-type ATPases consist of two structural domains, F(1) containing the extramembraneous catalytic core and F(0) containing the membrane proton channel, linked together by a central stalk and a peripheral stalk. During catalysis, ATP synthesis in the catalytic domain of F(1) is coupled via a rotary mechanism of the central stalk subunits to proton translocation. Its function is as follows. Key component of the F(0) channel; it plays a direct role in translocation across the membrane. A homomeric c-ring of between 10-14 subunits forms the central stalk rotor element with the F(1) delta and epsilon subunits. This is ATP synthase subunit c, chloroplastic from Cyanidioschyzon merolae (strain NIES-3377 / 10D) (Unicellular red alga).